The following is a 354-amino-acid chain: tRNA-specific 2-thiouridylase MnmA (354 aa).

ATP-binding positions include 6–13 and L33; that span reads LLSGGVDS. The active-site Nucleophile is the C100. A disulfide bridge links C100 with C195. Residue G123 participates in ATP binding. The segment at 145 to 147 is interaction with tRNA; sequence KDQ. The Cysteine persulfide intermediate role is filled by C195.

Belongs to the MnmA/TRMU family.

Its subcellular location is the cytoplasm. It carries out the reaction S-sulfanyl-L-cysteinyl-[protein] + uridine(34) in tRNA + AH2 + ATP = 2-thiouridine(34) in tRNA + L-cysteinyl-[protein] + A + AMP + diphosphate + H(+). Its function is as follows. Catalyzes the 2-thiolation of uridine at the wobble position (U34) of tRNA, leading to the formation of s(2)U34. The chain is tRNA-specific 2-thiouridylase MnmA from Borrelia duttonii (strain Ly).